The sequence spans 823 residues: Translation initiation factor IF-2 (823 aa).

2 disordered regions span residues 30–66 (VPPS…DDKR) and 156–192 (TPSH…IKKV). A compositionally biased stretch (polar residues) spans 36–48 (RGTSTGKSFTTVE). Basic and acidic residues predominate over residues 56-66 (PGEYISHDDKR). Residues 322–491 (PRPPVVTVMG…LLLAEMLELS (170 aa)) form the tr-type G domain. The G1 stretch occupies residues 331 to 338 (GHVDHGKT). A GTP-binding site is contributed by 331 to 338 (GHVDHGKT). The tract at residues 356–360 (GITQH) is G2. Residues 377–380 (DTPG) are G3. GTP-binding positions include 377–381 (DTPGH) and 431–434 (NKID). Positions 431-434 (NKID) are G4. The tract at residues 467-469 (SAK) is G5.

This sequence belongs to the TRAFAC class translation factor GTPase superfamily. Classic translation factor GTPase family. IF-2 subfamily.

Its subcellular location is the cytoplasm. One of the essential components for the initiation of protein synthesis. Protects formylmethionyl-tRNA from spontaneous hydrolysis and promotes its binding to the 30S ribosomal subunits. Also involved in the hydrolysis of GTP during the formation of the 70S ribosomal complex. This Anaplasma phagocytophilum (strain HZ) protein is Translation initiation factor IF-2.